Reading from the N-terminus, the 256-residue chain is 1-(5-phosphoribosyl)-5-[(5-phosphoribosylamino)methylideneamino] imidazole-4-carboxamide isomerase (256 aa).

The active-site Proton acceptor is the D8. The active-site Proton donor is D130.

Belongs to the HisA/HisF family.

It is found in the cytoplasm. It carries out the reaction 1-(5-phospho-beta-D-ribosyl)-5-[(5-phospho-beta-D-ribosylamino)methylideneamino]imidazole-4-carboxamide = 5-[(5-phospho-1-deoxy-D-ribulos-1-ylimino)methylamino]-1-(5-phospho-beta-D-ribosyl)imidazole-4-carboxamide. The protein operates within amino-acid biosynthesis; L-histidine biosynthesis; L-histidine from 5-phospho-alpha-D-ribose 1-diphosphate: step 4/9. The sequence is that of 1-(5-phosphoribosyl)-5-[(5-phosphoribosylamino)methylideneamino] imidazole-4-carboxamide isomerase from Chlorobium phaeovibrioides (strain DSM 265 / 1930) (Prosthecochloris vibrioformis (strain DSM 265)).